A 682-amino-acid chain; its full sequence is Potassium-transporting ATPase ATP-binding subunit (682 aa).

The next 4 membrane-spanning stretches (helical) occupy residues 34–54 (PVMF…IAMA), 62–82 (ALFS…ANFA), 219–239 (IALT…TATL), and 254–274 (VLVA…LSAI). Catalysis depends on Asp307, which acts as the 4-aspartylphosphate intermediate. ATP contacts are provided by residues Asp344, Glu348, 377 to 384 (FTAQSRMS), and Lys395. Residues Asp518 and Asp522 each contribute to the Mg(2+) site. A run of 3 helical transmembrane segments spans residues 588-608 (FAII…LNIM), 616-636 (AILS…PLAL), and 656-676 (IYGL…DLLL).

It belongs to the cation transport ATPase (P-type) (TC 3.A.3) family. Type IA subfamily. In terms of assembly, the system is composed of three essential subunits: KdpA, KdpB and KdpC.

It is found in the cell inner membrane. The enzyme catalyses K(+)(out) + ATP + H2O = K(+)(in) + ADP + phosphate + H(+). In terms of biological role, part of the high-affinity ATP-driven potassium transport (or Kdp) system, which catalyzes the hydrolysis of ATP coupled with the electrogenic transport of potassium into the cytoplasm. This subunit is responsible for energy coupling to the transport system and for the release of the potassium ions to the cytoplasm. The protein is Potassium-transporting ATPase ATP-binding subunit of Escherichia coli (strain UTI89 / UPEC).